A 512-amino-acid polypeptide reads, in one-letter code: Histidine ammonia-lyase (512 aa).

Residues cysteine 143–glycine 145 constitute a cross-link (5-imidazolinone (Cys-Gly)). The residue at position 144 (serine 144) is a 2,3-didehydroalanine (Ser).

It belongs to the PAL/histidase family. Post-translationally, contains an active site 4-methylidene-imidazol-5-one (MIO), which is formed autocatalytically by cyclization and dehydration of residues Cys-Ser-Gly.

The protein resides in the cytoplasm. It carries out the reaction L-histidine = trans-urocanate + NH4(+). The protein operates within amino-acid degradation; L-histidine degradation into L-glutamate; N-formimidoyl-L-glutamate from L-histidine: step 1/3. In Streptomyces coelicolor (strain ATCC BAA-471 / A3(2) / M145), this protein is Histidine ammonia-lyase.